We begin with the raw amino-acid sequence, 108 residues long: RNA silencing suppressor (108 aa).

Residues R47–R50 are basic. Residues C57–C78 form a C4-type zinc finger.

The protein belongs to the carlaviruses nucleic acid-binding protein family.

In terms of biological role, suppressor of viral-induced RNA silencing. Increases the accumulation of viral RNA and enhances viral cell-to-cell movement by inhibiting RNA silencing. This Solanum tuberosum (Potato) protein is RNA silencing suppressor.